Here is a 2237-residue protein sequence, read N- to C-terminus: Activating signal cointegrator 1 complex subunit 3-like (2237 aa).

Disordered regions lie at residues 1–48, 71–118, 242–330, and 445–472; these read MSEE…RGEM, TIEK…KPID, DEEE…SKLI, and EKTI…DEIK. Basic and acidic residues predominate over residues 24 to 37; that stretch reads ERNRSELKEPKGEP. Polar residues predominate over residues 79-97; that stretch reads VNSSNDTYSTTKKVKNQNP. Residues 105–114 are compositionally biased toward low complexity; the sequence is RKSNGNNNNE. Positions 242–282 are enriched in acidic residues; it reads DEEEEEENLSDFEIRDDDDDDDDVDNNEVDDNNNNDSEAQD. 2 stretches are compositionally biased toward basic and acidic residues: residues 312–325 and 446–460; these read QKPD…DKNN and KTIE…DVEM. Positions 440 to 468 form a coiled coil; it reads TAATTEKTIEKTESNKKDVEMKQQQQQQQ. Residues 561 to 745 enclose the Helicase ATP-binding 1 domain; sequence DCAFKTDNNL…FLRVEPDGVF (185 aa). 574–581 contacts ATP; it reads APTSSGKT. The DEAH box signature appears at 687 to 690; sequence DEIH. Residues 755–990 enclose the Helicase C-terminal 1 domain; sequence PLEQQYIGIS…TVRDAVNWLG (236 aa). The SEC63 1 domain occupies 1050-1356; sequence STELGKVASH…GAEYSLPISF (307 aa). Residues 1407–1584 enclose the Helicase ATP-binding 2 domain; that stretch reads NCMYQSNDNA…WIGATPQTCY (178 aa). 1420-1427 serves as a coordination point for ATP; it reads APTNSGKT. The short motif at 1526–1529 is the DEAH box element; sequence DELH. The Helicase C-terminal 2 domain occupies 1657–1832; it reads TLTKPYLVCE…TITKKQDALD (176 aa). Residues 1892–2215 form the SEC63 2 domain; that stretch reads PLNLGIIASY…GCDQEHELNI (324 aa).

It belongs to the helicase family.

The chain is Activating signal cointegrator 1 complex subunit 3-like (ascc3l) from Dictyostelium discoideum (Social amoeba).